The following is a 150-amino-acid chain: Ribosome maturation factor RimP (150 aa).

It belongs to the RimP family.

Its subcellular location is the cytoplasm. Its function is as follows. Required for maturation of 30S ribosomal subunits. The chain is Ribosome maturation factor RimP from Salmonella dublin (strain CT_02021853).